Consider the following 286-residue polypeptide: Structure-specific endonuclease subunit SLX1 (286 aa).

Residues 15 to 98 (SFYGVYILKS…QHAYQTRHIN (84 aa)) enclose the GIY-YIG domain.

This sequence belongs to the SLX1 family. In terms of assembly, forms a heterodimer with SLX4. Requires a divalent metal cation as cofactor.

The protein resides in the nucleus. Its function is as follows. Catalytic subunit of the SLX1-SLX4 structure-specific endonuclease that resolves DNA secondary structures generated during DNA repair and recombination. Has endonuclease activity towards branched DNA substrates, introducing single-strand cuts in duplex DNA close to junctions with ss-DNA. In Candida dubliniensis (strain CD36 / ATCC MYA-646 / CBS 7987 / NCPF 3949 / NRRL Y-17841) (Yeast), this protein is Structure-specific endonuclease subunit SLX1.